Consider the following 337-residue polypeptide: Glyceraldehyde-3-phosphate dehydrogenase (337 aa).

NAD(+)-binding positions include 12–13 (RI), D34, and K79. D-glyceraldehyde 3-phosphate is bound by residues 150–152 (SCT), T181, 210–211 (TG), and R233. C151 functions as the Nucleophile in the catalytic mechanism. N315 is an NAD(+) binding site.

The protein belongs to the glyceraldehyde-3-phosphate dehydrogenase family. Homotetramer.

The protein localises to the cytoplasm. It catalyses the reaction D-glyceraldehyde 3-phosphate + phosphate + NAD(+) = (2R)-3-phospho-glyceroyl phosphate + NADH + H(+). It participates in carbohydrate degradation; glycolysis; pyruvate from D-glyceraldehyde 3-phosphate: step 1/5. The polypeptide is Glyceraldehyde-3-phosphate dehydrogenase (GPD) (Cochliobolus lunatus (Filamentous fungus)).